We begin with the raw amino-acid sequence, 597 residues long: Proline--tRNA ligase (597 aa).

Belongs to the class-II aminoacyl-tRNA synthetase family. ProS type 1 subfamily. Homodimer.

The protein localises to the cytoplasm. It carries out the reaction tRNA(Pro) + L-proline + ATP = L-prolyl-tRNA(Pro) + AMP + diphosphate. Catalyzes the attachment of proline to tRNA(Pro) in a two-step reaction: proline is first activated by ATP to form Pro-AMP and then transferred to the acceptor end of tRNA(Pro). As ProRS can inadvertently accommodate and process non-cognate amino acids such as alanine and cysteine, to avoid such errors it has two additional distinct editing activities against alanine. One activity is designated as 'pretransfer' editing and involves the tRNA(Pro)-independent hydrolysis of activated Ala-AMP. The other activity is designated 'posttransfer' editing and involves deacylation of mischarged Ala-tRNA(Pro). The misacylated Cys-tRNA(Pro) is not edited by ProRS. The chain is Proline--tRNA ligase from Bifidobacterium longum (strain NCC 2705).